We begin with the raw amino-acid sequence, 203 residues long: MSVLSSRTGRDRQRYDNNFRLVSGCIPYRLMKADETEEDSGVDFVNKLEVLMVSSPNRHDLVFPKGGWEDDETVLEAASREAIEEAGVKGILRELPLGVWEFRSKSSTVEDECLGGCKGYMFALKVTEELEDWPERKNRERRWLTVKEALELCRYEWMQRALEEFLRVMEDERRLRTEEETVHDSSKLEEESQIDPWYCFVVN.

Residues 18 to 166 enclose the Nudix hydrolase domain; sequence NFRLVSGCIP…WMQRALEEFL (149 aa). A Nudix box motif is present at residues 66-87; sequence GGWEDDETVLEAASREAIEEAG. The Mg(2+) site is built by E81 and E85.

This sequence belongs to the Nudix hydrolase family. It depends on Mg(2+) as a cofactor. The cofactor is Mn(2+). In terms of tissue distribution, expressed in roots, leaves, stems and inflorescences.

The protein localises to the mitochondrion. Its function is as follows. Probably mediates the hydrolysis of some nucleoside diphosphate derivatives. The chain is Nudix hydrolase 12, mitochondrial (NUDT12) from Arabidopsis thaliana (Mouse-ear cress).